Here is a 227-residue protein sequence, read N- to C-terminus: Lysosomal-associated transmembrane protein 4B (227 aa).

Helical transmembrane passes span 26–46 (ILLGIWYLIINAVVLLILLSA), 72–92 (MCIAIAISLLMILICAMATYG), 100–120 (WIIPFFCYQIFDFALNTLVAI), and 153–173 (CLVLVILLFIGIILTFKGYLI). The segment at 205 to 222 (PPYDDATAVTGTAKEPPP) is required for NEDD4 interaction.

Belongs to the LAPTM4/LAPTM5 transporter family. In terms of assembly, homooligomer; upon reaching the lysosomes. Interacts with MCOLN1. Interacts with NEDD4; may play a role in the lysosomal sorting of LAPTM4B; enhances HGS association with NEDD4; mediates inhibition of EGFR degradation. Interacts with PIP5K1C; promotes SNX5 association with LAPTM4B; kinase activity of PIP5K1C is required; interaction is regulated by phosphatidylinositol 4,5-bisphosphate generated by PIP5K1C. Interacts with HGS; promotes HGS ubiquitination. Interacts with SNX5. Interacts with SLC3A2 and SLC7A5; recruits SLC3A2 and SLC7A5 to lysosomes to promote leucine uptake into these organelles and is required for mTORC1 activation. Interacts with LRRC32; decreases TGFB1 production in regulatory T cells. Interacts with BECN1; competes with EGFR for LAPTM4B binding; regulates EGFR activity. Interacts with EGFR; positively correlates with EGFR activation. In terms of processing, undergoes proteolytic cleavage following delivery to the lysosomes. Ubiquitinated by NEDD4.

It is found in the endomembrane system. It localises to the late endosome membrane. The protein resides in the cell membrane. Its subcellular location is the cell projection. The protein localises to the lysosome membrane. It is found in the endosome membrane. It localises to the endosome. The protein resides in the multivesicular body membrane. Its subcellular location is the multivesicular body lumen. Its function is as follows. Required for optimal lysosomal function. Blocks EGF-stimulated EGFR intraluminal sorting and degradation. Conversely by binding with the phosphatidylinositol 4,5-bisphosphate, regulates its PIP5K1C interaction, inhibits HGS ubiquitination and relieves LAPTM4B inhibition of EGFR degradation. Recruits SLC3A2 and SLC7A5 (the Leu transporter) to the lysosome, promoting entry of leucine and other essential amino acid (EAA) into the lysosome, stimulating activation of proton-transporting vacuolar (V)-ATPase protein pump (V-ATPase) and hence mTORC1 activation. Plays a role as negative regulator of TGFB1 production in regulatory T cells. Binds ceramide and facilitates its exit from late endosome in order to control cell death pathways. This Rattus norvegicus (Rat) protein is Lysosomal-associated transmembrane protein 4B.